The following is a 442-amino-acid chain: MSKTYHFIGIKGSGMSALALMLHQMGYKVQGSDVEKYYFTQRGLEQAGIPILPFDEKNITEDVELIAGNAFREDNNVEIAYAIKNGYKFKRYHEFLGHFMNQFTSFGVAGAHGKTSTTGLLSHSMKNITDTSYLIGDGTGRGSANAQYFVFEADEYERHFMPYHPAYSIITNIDFDHPDYFTSIDDVFSAFDDYAKQVQKGLFVYGEDSNLRKITSNAPIYYYGFEENDDFMATDIIRTTTGSNFKVKHDGQIIGEFHVPAYGRHNILNATAVIANLYVAGFDMALVAEHLKTFSGVKRRFTEKIISDTVIIDDFAHHPTEIIATLDAARQKYPSKEIVAIFQPHTFTRTIALLDDFAEALNEADAVYLAQIYGSAREVDHGDVKVEDLAAKINKPAKVVTVENVSPLLDHDNAIYVFMGAGDIQLYERSFEELLASLQTHM.

An ATP-binding site is contributed by 110-116; the sequence is GAHGKTS.

Belongs to the MurCDEF family.

It is found in the cytoplasm. It catalyses the reaction UDP-N-acetyl-alpha-D-muramate + L-alanine + ATP = UDP-N-acetyl-alpha-D-muramoyl-L-alanine + ADP + phosphate + H(+). It participates in cell wall biogenesis; peptidoglycan biosynthesis. In terms of biological role, cell wall formation. This chain is UDP-N-acetylmuramate--L-alanine ligase, found in Streptococcus thermophilus (strain ATCC BAA-491 / LMD-9).